A 249-amino-acid chain; its full sequence is uncharacterized protein (249 aa).

The signal sequence occupies residues 1–25 (MRYLNTKNIIAAGVLLSCMSSIAWG).

It belongs to the periplasmic pilus chaperone family.

Its subcellular location is the periplasm. In terms of biological role, could be required for the biogenesis of a putative fimbria. This is an uncharacterized protein from Escherichia coli (strain K12).